Here is a 292-residue protein sequence, read N- to C-terminus: 4-hydroxy-tetrahydrodipicolinate synthase (292 aa).

Pyruvate is bound at residue Thr-45. Tyr-133 (proton donor/acceptor) is an active-site residue. The Schiff-base intermediate with substrate role is filled by Lys-162. Ile-204 provides a ligand contact to pyruvate.

Belongs to the DapA family. In terms of assembly, homotetramer; dimer of dimers.

It localises to the cytoplasm. It catalyses the reaction L-aspartate 4-semialdehyde + pyruvate = (2S,4S)-4-hydroxy-2,3,4,5-tetrahydrodipicolinate + H2O + H(+). It functions in the pathway amino-acid biosynthesis; L-lysine biosynthesis via DAP pathway; (S)-tetrahydrodipicolinate from L-aspartate: step 3/4. Functionally, catalyzes the condensation of (S)-aspartate-beta-semialdehyde [(S)-ASA] and pyruvate to 4-hydroxy-tetrahydrodipicolinate (HTPA). The sequence is that of 4-hydroxy-tetrahydrodipicolinate synthase from Maridesulfovibrio salexigens (strain ATCC 14822 / DSM 2638 / NCIMB 8403 / VKM B-1763) (Desulfovibrio salexigens).